Consider the following 419-residue polypeptide: Carboxypeptidase A1 (419 aa).

The signal sequence occupies residues 1–16; the sequence is MRGLLVLSVLLGAVFG. Residues 17–110 constitute a propeptide, activation peptide; the sequence is KEDFVGHQVL…QEQMFAFRSR (94 aa). A Peptidase M14 domain is found at 121–414; it reads TYHTLEEIYD…LALLTIMEHT (294 aa). His179 and Glu182 together coordinate Zn(2+). Substrate contacts are provided by residues 179 to 182, Arg237, and 254 to 255; these read HSRE and NR. Residues Cys248 and Cys271 are joined by a disulfide bond. His306 provides a ligand contact to Zn(2+). Substrate-binding positions include 307 to 308 and Tyr358; that span reads SY. Catalysis depends on Glu380, which acts as the Proton donor/acceptor.

This sequence belongs to the peptidase M14 family. Monomer. May form a complex with proelastase 2. Zn(2+) is required as a cofactor.

The protein resides in the secreted. The catalysed reaction is Release of a C-terminal amino acid, but little or no action with -Asp, -Glu, -Arg, -Lys or -Pro.. The enzyme catalyses leukotriene C4 + H2O = leukotriene F4 + glycine. Inhibited by interaction with the S.magnifica carboxypeptidase inhibitor SmCI. Carboxypeptidase that catalyzes the release of a C-terminal amino acid, but has little or no action with -Asp, -Glu, -Arg, -Lys or -Pro. Catalyzes the conversion of leukotriene C4 to leukotriene F4 via the hydrolysis of an amide bond. In Homo sapiens (Human), this protein is Carboxypeptidase A1.